Reading from the N-terminus, the 25-residue chain is Ocellatin-F1 (25 aa).

Leu-25 bears the Leucine amide mark.

This sequence belongs to the frog skin active peptide (FSAP) family. Ocellatin subfamily. As to expression, expressed by the skin glands.

The protein resides in the secreted. Functionally, antibacterial peptide that inhibits reference strains of both Gram-negative bacteria (E.coli, P.aeruginosa, E.cloacae, K.pneumoniae, and A.actinomycetemcomitans) and Gram-positive bacteria (S.aureus) with relatively low potencies (MIC=25-400 uM). Shows antifungal activity against C.lusitaniae (MIC=50.25 uM), but no activity against C.albicans. In the presence of an alkaloid (bufotenine), inhibits cellular infection by the rabies virus. The peptide shows very low hemolytic activity against rabbit erythrocytes. The low amphipathicity of alpha-helices demonstrated by wheel projection as well as the low cationicity may explain the low antibacterial and hemolytic potencies. This Leptodactylus labyrinthicus (Labyrinth frog) protein is Ocellatin-F1.